Here is a 122-residue protein sequence, read N- to C-terminus: Large ribosomal subunit protein uL14 (122 aa).

Belongs to the universal ribosomal protein uL14 family. In terms of assembly, part of the 50S ribosomal subunit. Forms a cluster with proteins L3 and L19. In the 70S ribosome, L14 and L19 interact and together make contacts with the 16S rRNA in bridges B5 and B8.

Its function is as follows. Binds to 23S rRNA. Forms part of two intersubunit bridges in the 70S ribosome. The chain is Large ribosomal subunit protein uL14 from Sinorhizobium fredii (strain NBRC 101917 / NGR234).